The chain runs to 450 residues: Tubulin alpha chain (450 aa).

Gln-11 lines the GTP pocket. The residue at position 40 (Lys-40) is an N6-acetyllysine. 7 residues coordinate GTP: Glu-71, Ser-140, Gly-144, Thr-145, Thr-179, Asn-206, and Asn-228. Residue Glu-71 coordinates Mg(2+). Residue Glu-254 is part of the active site.

Belongs to the tubulin family. In terms of assembly, dimer of alpha and beta chains. A typical microtubule is a hollow water-filled tube with an outer diameter of 25 nm and an inner diameter of 15 nM. Alpha-beta heterodimers associate head-to-tail to form protofilaments running lengthwise along the microtubule wall with the beta-tubulin subunit facing the microtubule plus end conferring a structural polarity. Microtubules usually have 13 protofilaments but different protofilament numbers can be found in some organisms and specialized cells. It depends on Mg(2+) as a cofactor. Acetylation of alpha chains at Lys-40 stabilizes microtubules and affects affinity and processivity of microtubule motors. This modification has a role in multiple cellular functions, ranging from cell motility, cell cycle progression or cell differentiation to intracellular trafficking and signaling.

It localises to the cytoplasm. The protein resides in the cytoskeleton. The catalysed reaction is GTP + H2O = GDP + phosphate + H(+). In terms of biological role, tubulin is the major constituent of microtubules, a cylinder consisting of laterally associated linear protofilaments composed of alpha- and beta-tubulin heterodimers. Microtubules grow by the addition of GTP-tubulin dimers to the microtubule end, where a stabilizing cap forms. Below the cap, tubulin dimers are in GDP-bound state, owing to GTPase activity of alpha-tubulin. The sequence is that of Tubulin alpha chain from Oxytricha granulifera (Ciliate).